We begin with the raw amino-acid sequence, 130 residues long: MAKLSTDELLDAFKEMTLLELSEFVKQFEDTFGVTAAAPVAIAAGPVAGGAGGEAAAVEEQDEFDVILESVGDKKIQVIKEVRALTSLGLKEAKDLVDGAPKPVLEKVAKEAADKAKAALEGAGATVTVK.

The protein belongs to the bacterial ribosomal protein bL12 family. As to quaternary structure, homodimer. Part of the ribosomal stalk of the 50S ribosomal subunit. Forms a multimeric L10(L12)X complex, where L10 forms an elongated spine to which 2 to 4 L12 dimers bind in a sequential fashion. Binds GTP-bound translation factors.

In terms of biological role, forms part of the ribosomal stalk which helps the ribosome interact with GTP-bound translation factors. Is thus essential for accurate translation. The polypeptide is Large ribosomal subunit protein bL12 (Parafrankia sp. (strain EAN1pec)).